The following is a 326-amino-acid chain: DNA repair protein RAD51 homolog 4 (326 aa).

The preferentially binds ssDNA stretch occupies residues 1–83 (MGVLRAGLCP…ELKTSTAILS (83 aa)). 107 to 114 (GAPGSGKT) contacts ATP.

This sequence belongs to the RecA family. RAD51 subfamily. In terms of assembly, part of the BCDX2 complex consisting of RAD51B, RAD51C, RAD51D and XRCC2; the complex has a ring-like structure arranged into a flat disc around a central channel. In the absence of DNA, the BCDX2 subcomplex XRCC2:RAD51D formed a multimeric ring structure; in the presence of single-stranded DNA it formed a filamentous structure with the ssDNA. Interacts with SWSAP1 and ZSWIM7; involved in homologous recombination repair. Interacts with BLM; required for stimulation of BLM activity by the BCDX2 subcomplex XRCC2:RAD51D.

It localises to the nucleus. In terms of biological role, involved in the homologous recombination repair (HRR) pathway of double-stranded DNA breaks arising during DNA replication or induced by DNA-damaging agents. Bind to single-stranded DNA (ssDNA) and has DNA-dependent ATPase activity. Part of the RAD51 paralog protein complex BCDX2 which acts in the BRCA1-BRCA2-dependent HR pathway. Upon DNA damage, BCDX2 acts downstream of BRCA2 recruitment and upstream of RAD51 recruitment. BCDX2 binds predominantly to the intersection of the four duplex arms of the Holliday junction and to junction of replication forks. The BCDX2 complex was originally reported to bind single-stranded DNA, single-stranded gaps in duplex DNA and specifically to nicks in duplex DNA. Involved in telomere maintenance. The BCDX2 subcomplex XRCC2:RAD51D can stimulate Holliday junction resolution by BLM. This Bos taurus (Bovine) protein is DNA repair protein RAD51 homolog 4 (RAD51D).